Consider the following 197-residue polypeptide: dTTP/UTP pyrophosphatase (197 aa).

The Proton acceptor role is filled by Asp70.

It belongs to the Maf family. YhdE subfamily. Homodimer. Can also form homotetramers. Requires a divalent metal cation as cofactor.

Its subcellular location is the cytoplasm. It carries out the reaction dTTP + H2O = dTMP + diphosphate + H(+). It catalyses the reaction UTP + H2O = UMP + diphosphate + H(+). The enzyme catalyses 5-methyl-UTP + H2O = 5-methyl-UMP + diphosphate + H(+). The catalysed reaction is psi-UTP + H2O = psi-UMP + diphosphate + H(+). It carries out the reaction 5-methyl-CTP + H2O = 5-methyl-CMP + diphosphate + H(+). In terms of biological role, nucleoside triphosphate pyrophosphatase that hydrolyzes dTTP and UTP. Can also hydrolyze TTP and the modified nucleotides 5-methyl-UTP (m(5)UTP), pseudo-UTP and 5-methyl-CTP (m(5)CTP). Has weak activity with CTP. May have a dual role in cell division arrest and in preventing the incorporation of modified nucleotides into cellular nucleic acids. Important in maintenance of cell shape. The sequence is that of dTTP/UTP pyrophosphatase (yhdE) from Escherichia coli (strain K12).